Consider the following 415-residue polypeptide: Gamma-glutamyl phosphate reductase (415 aa).

The protein belongs to the gamma-glutamyl phosphate reductase family.

Its subcellular location is the cytoplasm. It catalyses the reaction L-glutamate 5-semialdehyde + phosphate + NADP(+) = L-glutamyl 5-phosphate + NADPH + H(+). It functions in the pathway amino-acid biosynthesis; L-proline biosynthesis; L-glutamate 5-semialdehyde from L-glutamate: step 2/2. Its function is as follows. Catalyzes the NADPH-dependent reduction of L-glutamate 5-phosphate into L-glutamate 5-semialdehyde and phosphate. The product spontaneously undergoes cyclization to form 1-pyrroline-5-carboxylate. This chain is Gamma-glutamyl phosphate reductase, found in Listeria monocytogenes serotype 4a (strain HCC23).